Here is a 218-residue protein sequence, read N- to C-terminus: dTTP/UTP pyrophosphatase (218 aa).

Residues 1–10 (MTASPSSAEG) are compositionally biased toward polar residues. Residues 1–20 (MTASPSSAEGSSGLPDRPKL) form a disordered region. The active-site Proton acceptor is D87.

It belongs to the Maf family. YhdE subfamily. Requires a divalent metal cation as cofactor.

It is found in the cytoplasm. The catalysed reaction is dTTP + H2O = dTMP + diphosphate + H(+). The enzyme catalyses UTP + H2O = UMP + diphosphate + H(+). In terms of biological role, nucleoside triphosphate pyrophosphatase that hydrolyzes dTTP and UTP. May have a dual role in cell division arrest and in preventing the incorporation of modified nucleotides into cellular nucleic acids. The protein is dTTP/UTP pyrophosphatase of Gluconobacter oxydans (strain 621H) (Gluconobacter suboxydans).